A 275-amino-acid chain; its full sequence is Bis(5'-nucleosyl)-tetraphosphatase, symmetrical (275 aa).

This sequence belongs to the Ap4A hydrolase family.

The enzyme catalyses P(1),P(4)-bis(5'-adenosyl) tetraphosphate + H2O = 2 ADP + 2 H(+). Hydrolyzes diadenosine 5',5'''-P1,P4-tetraphosphate to yield ADP. The chain is Bis(5'-nucleosyl)-tetraphosphatase, symmetrical from Photorhabdus laumondii subsp. laumondii (strain DSM 15139 / CIP 105565 / TT01) (Photorhabdus luminescens subsp. laumondii).